Consider the following 87-residue polypeptide: Mitochondrial import protein 2 (87 aa).

At 1 to 53 (MADSEDTSVILQGIDTINSVEGLEEDGYLSDEDTSLSNELADAQRQWEESLQQ) the chain is on the cytoplasmic side. A helical membrane pass occupies residues 54 to 71 (LNKLLNWVLLPLLGKYIG). Over 72 to 87 (RRMAKTLWSRFIEHFV) the chain is Mitochondrial intermembrane.

This sequence belongs to the MIM2 family. As to quaternary structure, component of the MIM complex containing at least MIM1 and MIM2. Interacts with MIM1; interaction is direct.

The protein localises to the mitochondrion outer membrane. Component of the MIM complex required for outer membrane protein import. Involved in import of the subset of proteins with multiple alpha-helical transmembrane segments, including UGO1, TOM20 and FZO1. This is Mitochondrial import protein 2 from Saccharomyces cerevisiae (strain ATCC 204508 / S288c) (Baker's yeast).